A 141-amino-acid polypeptide reads, in one-letter code: Large ribosomal subunit protein uL11c (141 aa).

The protein belongs to the universal ribosomal protein uL11 family. As to quaternary structure, part of the ribosomal stalk of the 50S ribosomal subunit. Interacts with L10 and the large rRNA to form the base of the stalk. L10 forms an elongated spine to which L12 dimers bind in a sequential fashion forming a multimeric L10(L12)X complex.

It is found in the plastid. Its subcellular location is the chloroplast. Functionally, forms part of the ribosomal stalk which helps the ribosome interact with GTP-bound translation factors. This Thalassiosira pseudonana (Marine diatom) protein is Large ribosomal subunit protein uL11c.